Reading from the N-terminus, the 170-residue chain is NADH-quinone oxidoreductase subunit B (170 aa).

Positions 46, 47, 111, and 141 each coordinate [4Fe-4S] cluster.

This sequence belongs to the complex I 20 kDa subunit family. NDH-1 is composed of 14 different subunits. Subunits NuoB, C, D, E, F, and G constitute the peripheral sector of the complex. It depends on [4Fe-4S] cluster as a cofactor.

Its subcellular location is the cell membrane. It carries out the reaction a quinone + NADH + 5 H(+)(in) = a quinol + NAD(+) + 4 H(+)(out). In terms of biological role, NDH-1 shuttles electrons from NADH, via FMN and iron-sulfur (Fe-S) centers, to quinones in the respiratory chain. The immediate electron acceptor for the enzyme in this species is believed to be a menaquinone. Couples the redox reaction to proton translocation (for every two electrons transferred, four hydrogen ions are translocated across the cytoplasmic membrane), and thus conserves the redox energy in a proton gradient. This chain is NADH-quinone oxidoreductase subunit B, found in Geobacillus thermodenitrificans (strain NG80-2).